A 365-amino-acid polypeptide reads, in one-letter code: tRNA N6-adenosine threonylcarbamoyltransferase (365 aa).

Fe cation contacts are provided by H119 and H123. Substrate is bound by residues 141–145, D174, and G187; that span reads LVSGG. Residues 184–203 form a disordered region; the sequence is QPGGPSVEGEARQGDPKRFR. The segment covering 192 to 201 has biased composition (basic and acidic residues); that stretch reads GEARQGDPKR. N289 lines the substrate pocket. Fe cation is bound at residue D317. Positions 342-365 are disordered; it reads ARPRWPLDQSSPAMLGSGKKGAKA.

It belongs to the KAE1 / TsaD family. It depends on Fe(2+) as a cofactor.

The protein localises to the cytoplasm. The catalysed reaction is L-threonylcarbamoyladenylate + adenosine(37) in tRNA = N(6)-L-threonylcarbamoyladenosine(37) in tRNA + AMP + H(+). In terms of biological role, required for the formation of a threonylcarbamoyl group on adenosine at position 37 (t(6)A37) in tRNAs that read codons beginning with adenine. Is involved in the transfer of the threonylcarbamoyl moiety of threonylcarbamoyl-AMP (TC-AMP) to the N6 group of A37, together with TsaE and TsaB. TsaD likely plays a direct catalytic role in this reaction. The polypeptide is tRNA N6-adenosine threonylcarbamoyltransferase (Ruegeria pomeroyi (strain ATCC 700808 / DSM 15171 / DSS-3) (Silicibacter pomeroyi)).